The following is a 701-amino-acid chain: Polyribonucleotide nucleotidyltransferase (701 aa).

Mg(2+) is bound by residues Asp-485 and Asp-491. One can recognise a KH domain in the interval 552–611 (PKTQIMSINPDKIRDVIGAGGKVINKIIQDTGVKIDIKEDGTVFVSSTDHNGVNEAIKII). One can recognise an S1 motif domain in the interval 621-689 (GEVYLGKVTK…NQGRINLSRK (69 aa)).

This sequence belongs to the polyribonucleotide nucleotidyltransferase family. Mg(2+) is required as a cofactor.

Its subcellular location is the cytoplasm. The enzyme catalyses RNA(n+1) + phosphate = RNA(n) + a ribonucleoside 5'-diphosphate. Involved in mRNA degradation. Catalyzes the phosphorolysis of single-stranded polyribonucleotides processively in the 3'- to 5'-direction. This is Polyribonucleotide nucleotidyltransferase from Clostridium beijerinckii (strain ATCC 51743 / NCIMB 8052) (Clostridium acetobutylicum).